The primary structure comprises 498 residues: ATP synthase subunit beta, chloroplastic (498 aa).

Residue 172–179 (GGAGVGKT) participates in ATP binding.

This sequence belongs to the ATPase alpha/beta chains family. F-type ATPases have 2 components, CF(1) - the catalytic core - and CF(0) - the membrane proton channel. CF(1) has five subunits: alpha(3), beta(3), gamma(1), delta(1), epsilon(1). CF(0) has four main subunits: a(1), b(1), b'(1) and c(9-12).

The protein localises to the plastid. The protein resides in the chloroplast thylakoid membrane. It catalyses the reaction ATP + H2O + 4 H(+)(in) = ADP + phosphate + 5 H(+)(out). Produces ATP from ADP in the presence of a proton gradient across the membrane. The catalytic sites are hosted primarily by the beta subunits. In Nicotiana sylvestris (Wood tobacco), this protein is ATP synthase subunit beta, chloroplastic.